The sequence spans 536 residues: Membrane protein insertase YidC (536 aa).

5 consecutive transmembrane segments (helical) span residues leucine 3–tryptophan 23, isoleucine 346–phenylalanine 366, glycine 417–isoleucine 437, leucine 454–isoleucine 474, and isoleucine 494–leucine 514.

This sequence belongs to the OXA1/ALB3/YidC family. Type 1 subfamily. As to quaternary structure, interacts with the Sec translocase complex via SecD. Specifically interacts with transmembrane segments of nascent integral membrane proteins during membrane integration.

Its subcellular location is the cell membrane. Functionally, required for the insertion and/or proper folding and/or complex formation of integral membrane proteins into the membrane. Involved in integration of membrane proteins that insert both dependently and independently of the Sec translocase complex, as well as at least some lipoproteins. Aids folding of multispanning membrane proteins. This Buchnera aphidicola subsp. Baizongia pistaciae (strain Bp) protein is Membrane protein insertase YidC.